A 635-amino-acid chain; its full sequence is Threonine--tRNA ligase (635 aa).

The TGS domain occupies 1–61; sequence MVSIRLPDGS…DRDASLAIVT (61 aa). Residues 242–533 form a catalytic region; that stretch reads DHRKLGKQLD…LIEHHAGAMP (292 aa). 3 residues coordinate Zn(2+): Cys333, His384, and His510.

This sequence belongs to the class-II aminoacyl-tRNA synthetase family. As to quaternary structure, homodimer. The cofactor is Zn(2+).

It localises to the cytoplasm. The enzyme catalyses tRNA(Thr) + L-threonine + ATP = L-threonyl-tRNA(Thr) + AMP + diphosphate + H(+). Catalyzes the attachment of threonine to tRNA(Thr) in a two-step reaction: L-threonine is first activated by ATP to form Thr-AMP and then transferred to the acceptor end of tRNA(Thr). Also edits incorrectly charged L-seryl-tRNA(Thr). This chain is Threonine--tRNA ligase, found in Burkholderia pseudomallei (strain 1106a).